Reading from the N-terminus, the 97-residue chain is Putative pterin-4-alpha-carbinolamine dehydratase (97 aa).

Belongs to the pterin-4-alpha-carbinolamine dehydratase family.

It carries out the reaction (4aS,6R)-4a-hydroxy-L-erythro-5,6,7,8-tetrahydrobiopterin = (6R)-L-erythro-6,7-dihydrobiopterin + H2O. This chain is Putative pterin-4-alpha-carbinolamine dehydratase, found in Ruegeria pomeroyi (strain ATCC 700808 / DSM 15171 / DSS-3) (Silicibacter pomeroyi).